The following is a 479-amino-acid chain: Aspartyl/glutamyl-tRNA(Asn/Gln) amidotransferase subunit B (479 aa).

It belongs to the GatB/GatE family. GatB subfamily. Heterotrimer of A, B and C subunits.

It carries out the reaction L-glutamyl-tRNA(Gln) + L-glutamine + ATP + H2O = L-glutaminyl-tRNA(Gln) + L-glutamate + ADP + phosphate + H(+). It catalyses the reaction L-aspartyl-tRNA(Asn) + L-glutamine + ATP + H2O = L-asparaginyl-tRNA(Asn) + L-glutamate + ADP + phosphate + 2 H(+). Its function is as follows. Allows the formation of correctly charged Asn-tRNA(Asn) or Gln-tRNA(Gln) through the transamidation of misacylated Asp-tRNA(Asn) or Glu-tRNA(Gln) in organisms which lack either or both of asparaginyl-tRNA or glutaminyl-tRNA synthetases. The reaction takes place in the presence of glutamine and ATP through an activated phospho-Asp-tRNA(Asn) or phospho-Glu-tRNA(Gln). This Streptococcus pyogenes serotype M3 (strain ATCC BAA-595 / MGAS315) protein is Aspartyl/glutamyl-tRNA(Asn/Gln) amidotransferase subunit B.